The sequence spans 326 residues: Ketol-acid reductoisomerase (NADP(+)) (326 aa).

Residues 1–180 (MDIIHDNAAD…GLTRGGVLEC (180 aa)) enclose the KARI N-terminal Rossmann domain. NADP(+) contacts are provided by residues 24 to 27 (YGAQ), arginine 47, and serine 51. Histidine 106 is an active-site residue. Glycine 132 provides a ligand contact to NADP(+). Residues 181-326 (TMAQETYEDL…AKIRSLFERN (146 aa)) form the KARI C-terminal knotted domain. Mg(2+) is bound by residues aspartate 189, glutamate 193, glutamate 225, and glutamate 229. Residue serine 250 coordinates substrate.

The protein belongs to the ketol-acid reductoisomerase family. It depends on Mg(2+) as a cofactor.

The catalysed reaction is (2R)-2,3-dihydroxy-3-methylbutanoate + NADP(+) = (2S)-2-acetolactate + NADPH + H(+). It catalyses the reaction (2R,3R)-2,3-dihydroxy-3-methylpentanoate + NADP(+) = (S)-2-ethyl-2-hydroxy-3-oxobutanoate + NADPH + H(+). It functions in the pathway amino-acid biosynthesis; L-isoleucine biosynthesis; L-isoleucine from 2-oxobutanoate: step 2/4. The protein operates within amino-acid biosynthesis; L-valine biosynthesis; L-valine from pyruvate: step 2/4. Functionally, involved in the biosynthesis of branched-chain amino acids (BCAA). Catalyzes an alkyl-migration followed by a ketol-acid reduction of (S)-2-acetolactate (S2AL) to yield (R)-2,3-dihydroxy-isovalerate. In the isomerase reaction, S2AL is rearranged via a Mg-dependent methyl migration to produce 3-hydroxy-3-methyl-2-ketobutyrate (HMKB). In the reductase reaction, this 2-ketoacid undergoes a metal-dependent reduction by NADPH to yield (R)-2,3-dihydroxy-isovalerate. The sequence is that of Ketol-acid reductoisomerase (NADP(+)) from Akkermansia muciniphila (strain ATCC BAA-835 / DSM 22959 / JCM 33894 / BCRC 81048 / CCUG 64013 / CIP 107961 / Muc).